The primary structure comprises 740 residues: MTISNTRDITPELIEAHGLKPDEYQRILELIGREPTFTELGIFSAMWNEHCSYKSSKKWLRTLPTSGPRVIQGPGENAGVVDIGDGDCVVFKMESHNHPSYIEPYQGAATGVGGILRDVFTMGARPVAAMNALRFGEPDHPKTRHLVSGVVSGVGGYGNAFGVPTVGGEVNFDKRYNGNILVNAFAAGLARHDGIFLSEAKGVGLPVVYLGAKTGRDGVGGATMASAEFDESIEEKRPTVQVGDPFTEKCLLEACLELMASGAVIAIQDMGAAGLTCSAVEMGAKGDLGIELILDHVPVREENMTAYEMMLSESQERMLMVLKPEKEAEAQAIFRKWGLDFAIVGKTTDDLRFRVIHQGEEVANLPIKDLGDEAPEYDRPWMEPGKHAPLPASNVPQVEDYSAALLKLIGSPDLSSRRWVYEQYDTLIQGNSLQVPGGDAGVIRVEGHETKALAFSSDVTPRYCEADPFEGGKQAVAECWRNITATGAEPLASTDNLNFGNPEKPEIMGQLVKAIEGIGEACRALDFPIVSGNVSLYNETNGQAILPTPTIAGVGLLPDWSQMAKIGGMQDGDTLVLLGGDGTHLGQSVYLRDLFDRADGPAPFVDLALEKRNGEFVRSAIRNGQVTACHDLSDGGLAIAVAEMAIKSGKGATLDAGDGLPHALLFGEDQARYVISATPEMAKLIALNAEGAGVPFRILGTVGGDRLKISKNVDVSVADLTQAYEGWFPNFMNGELTGNN.

His-50 is a catalytic residue. 2 residues coordinate ATP: Tyr-53 and Lys-92. Glu-94 provides a ligand contact to Mg(2+). Residues Ser-95–His-98 and Arg-117 each bind substrate. His-96 serves as the catalytic Proton acceptor. Asp-118 provides a ligand contact to Mg(2+). Gln-241 is a substrate binding site. Asp-269 contributes to the Mg(2+) binding site. Glu-313–Gln-315 contacts substrate. Residues Asp-495 and Gly-532 each coordinate ATP. Asn-533 is a binding site for Mg(2+). Ser-535 lines the substrate pocket.

The protein belongs to the FGAMS family. In terms of assembly, monomer. Part of the FGAM synthase complex composed of 1 PurL, 1 PurQ and 2 PurS subunits.

Its subcellular location is the cytoplasm. It catalyses the reaction N(2)-formyl-N(1)-(5-phospho-beta-D-ribosyl)glycinamide + L-glutamine + ATP + H2O = 2-formamido-N(1)-(5-O-phospho-beta-D-ribosyl)acetamidine + L-glutamate + ADP + phosphate + H(+). The protein operates within purine metabolism; IMP biosynthesis via de novo pathway; 5-amino-1-(5-phospho-D-ribosyl)imidazole from N(2)-formyl-N(1)-(5-phospho-D-ribosyl)glycinamide: step 1/2. In terms of biological role, part of the phosphoribosylformylglycinamidine synthase complex involved in the purines biosynthetic pathway. Catalyzes the ATP-dependent conversion of formylglycinamide ribonucleotide (FGAR) and glutamine to yield formylglycinamidine ribonucleotide (FGAM) and glutamate. The FGAM synthase complex is composed of three subunits. PurQ produces an ammonia molecule by converting glutamine to glutamate. PurL transfers the ammonia molecule to FGAR to form FGAM in an ATP-dependent manner. PurS interacts with PurQ and PurL and is thought to assist in the transfer of the ammonia molecule from PurQ to PurL. The sequence is that of Phosphoribosylformylglycinamidine synthase subunit PurL from Brucella canis (strain ATCC 23365 / NCTC 10854 / RM-666).